We begin with the raw amino-acid sequence, 523 residues long: Synaptotagmin-10 (523 aa).

Residues Met1 to Ser55 are Vesicular-facing. Positions Cys13–Ser35 are cysteine motif. Residues Leu56–Phe76 form a helical membrane-spanning segment. At Trp77–Pro523 the chain is on the cytoplasmic side. Thr136 bears the Phosphothreonine mark. 2 consecutive C2 domains span residues Thr231 to Lys352 and Asp363 to His496. Ca(2+) contacts are provided by Asp262, Asp268, Asp320, Phe321, Asp322, Ser325, Asp328, Asp394, Asp400, Asp454, and Asp456.

This sequence belongs to the synaptotagmin family. As to quaternary structure, homodimer; disulfide-linked via the cysteine motif. Can also form heterodimers with SYT3, SYT6, SYT7 and SYT9. It depends on Ca(2+) as a cofactor.

Its subcellular location is the cytoplasmic vesicle. The protein localises to the secretory vesicle membrane. Its function is as follows. Ca(2+) sensor specifically required for the Ca(2+)-dependent exocytosis of secretory vesicles containing IGF1 in neurons of the olfactory bulb. Exocytosis of IGF1 is required for sensory perception of smell. Not involved in Ca(2+)-dependent synaptic vesicle exocytosis. Acts through Ca(2+) and phospholipid binding to the C2 domain: Ca(2+) induces binding of the C2-domains to phospholipid membranes and to assembled SNARE-complexes; both actions contribute to triggering exocytosis. The chain is Synaptotagmin-10 (Syt10) from Rattus norvegicus (Rat).